The chain runs to 97 residues: F-actin-capping protein subunit beta (97 aa).

Disordered regions lie at residues 1-27 and 43-66; these read RLPP…AMPS and KSGS…ETVS. Over residues 43 to 57 the composition is skewed to polar residues; that stretch reads KSGSGTMNLGGSLTR. The residue at position 97 (lysine 97) is an N6-acetyllysine.

The protein belongs to the F-actin-capping protein beta subunit family. As to quaternary structure, component of the F-actin capping complex, composed of a heterodimer of an alpha and a beta subunit. Subunit of dynactin, a multiprotein complex part of a tripartite complex with dynein and a adapter, such as BICDL1, BICD2 or HOOK3. The dynactin complex is built around ACTR1A/ACTB filament and consists of an actin-related filament composed of a shoulder domain, a pointed end and a barbed end. Its length is defined by its flexible shoulder domain. The soulder is composed of 2 DCTN1 subunits, 4 DCTN2 and 2 DCTN3. The 4 DCNT2 (via N-terminus) bind the ACTR1A filament and act as molecular rulers to determine the length. The pointed end is important for binding dynein-dynactin cargo adapters. Consists of 4 subunits: ACTR10, DCNT4, DCTN5 and DCTN6. The barbed end is composed of a CAPZA1:CAPZB heterodimers, which binds ACTR1A/ACTB filament and dynactin and stabilizes dynactin. Interacts with ARHGAP17. Interaction with RCSD1/CAPZIP. Component of the WASH complex, composed of F-actin-capping protein subunit alpha (CAPZA1, CAPZA2 or CAPZA3), F-actin-capping protein subunit beta (CAPZB), WASH (WASHC1, WASH2P, WASH3P, WASH4P, WASH5P or WASH6P), WASHC2 (WASHC2A or WASHC2C), WASHC3, WASHC4 and WASHC5. Interacts with ACTG1. Directly interacts with CRACD; this interaction decreases binding to actin.

Its subcellular location is the cytoplasm. It is found in the cytoskeleton. It localises to the myofibril. The protein resides in the sarcomere. Functionally, F-actin-capping proteins bind in a Ca(2+)-independent manner to the fast growing ends of actin filaments (barbed end) thereby blocking the exchange of subunits at these ends. Unlike other capping proteins (such as gelsolin and severin), these proteins do not sever actin filaments. Plays a role in the regulation of cell morphology and cytoskeletal organization. Forms, with CAPZB, the barbed end of the fast growing ends of actin filaments in the dynactin complex and stabilizes dynactin structure. The dynactin multiprotein complex activates the molecular motor dynein for ultra-processive transport along microtubules. In Mesocricetus auratus (Golden hamster), this protein is F-actin-capping protein subunit beta.